Reading from the N-terminus, the 91-residue chain is Putative septation protein SpoVG (91 aa).

It belongs to the SpoVG family.

Functionally, could be involved in septation. The chain is Putative septation protein SpoVG from Caldanaerobacter subterraneus subsp. tengcongensis (strain DSM 15242 / JCM 11007 / NBRC 100824 / MB4) (Thermoanaerobacter tengcongensis).